Here is a 324-residue protein sequence, read N- to C-terminus: Quinolinate synthase 1 (324 aa).

Positions 48 and 66 each coordinate iminosuccinate. Cysteine 111 is a [4Fe-4S] cluster binding site. Iminosuccinate contacts are provided by residues tyrosine 137–asparagine 139 and serine 154. Cysteine 196 lines the [4Fe-4S] cluster pocket. Residues histidine 222 to glutamate 224 and threonine 239 each bind iminosuccinate. Cysteine 282 is a [4Fe-4S] cluster binding site.

Belongs to the quinolinate synthase family. Type 2 subfamily. It depends on [4Fe-4S] cluster as a cofactor.

The protein localises to the cytoplasm. It carries out the reaction iminosuccinate + dihydroxyacetone phosphate = quinolinate + phosphate + 2 H2O + H(+). The protein operates within cofactor biosynthesis; NAD(+) biosynthesis; quinolinate from iminoaspartate: step 1/1. Functionally, catalyzes the condensation of iminoaspartate with dihydroxyacetone phosphate to form quinolinate. In Mesorhizobium japonicum (strain LMG 29417 / CECT 9101 / MAFF 303099) (Mesorhizobium loti (strain MAFF 303099)), this protein is Quinolinate synthase 1.